Here is a 297-residue protein sequence, read N- to C-terminus: MAELTALESLIEMGFPRGRAEKALALTGNQGIEAAMDWLMEHEDDPDVDEPLETPLSHILGREPTPSEQVGPEGSGSAAGESKPVLTEEERQEQTKRMLELVAQKQREREEREEREALEREKQRRRQGQELSAARQKLQEDEIRRAAEERRREKAEELAARQRVREKIERDKAERAQKYGGTVGSRSSPPATDPGPVPSSPRQEPPTKREYDQCRIQVRLPDGTSLTQTFRAREQLAAVRLYVELHRGEEPGQDQDPVQLLSGFPRRAFSEADMERPLQELGLVPSAVLIVAKKCPS.

Ala2 carries the N-acetylalanine modification. The region spanning 2 to 42 is the UBA domain; the sequence is AELTALESLIEMGFPRGRAEKALALTGNQGIEAAMDWLMEH. Residues 38-212 are disordered; sequence WLMEHEDDPD…QEPPTKREYD (175 aa). Over residues 42–52 the composition is skewed to acidic residues; it reads HEDDPDVDEPL. The interval 43-297 is interaction with BRCA1; it reads EDDPDVDEPL…VLIVAKKCPS (255 aa). 2 stretches are compositionally biased toward basic and acidic residues: residues 86 to 122 and 137 to 177; these read LTEE…EREK and KLQE…ERAQ. The stretch at 86–172 forms a coiled coil; the sequence is LTEEERQEQT…RVREKIERDK (87 aa). Residue Ser199 is modified to Phosphoserine. Ser200 bears the Phosphoserine; by MAPK12 mark. Residues Thr207 and Thr229 each carry the phosphothreonine modification. Residues 209 to 291 form the UBX domain; the sequence is REYDQCRIQV…GLVPSAVLIV (83 aa). Ser270 is subject to Phosphoserine.

In terms of assembly, component of a complex required to couple retrotranslocation, ubiquitination and deglycosylation composed of NGLY1, SAKS1, AMFR, VCP and RAD23B. Interacts with HOMER2. Interacts directly with VCP. Interacts with BRCA1 and BARD1; interaction takes place when BRCA1 is not autoubiquitinated bur is strongly enhanced in the presence of autoubiquitinated BRCA1.

The protein localises to the cytoplasm. Ubiquitin-binding protein that interacts with the BRCA1-BARD1 heterodimer, and regulates its activity. Specifically binds 'Lys-6'-linked polyubiquitin chains. Interaction with autoubiquitinated BRCA1, leads to inhibit the E3 ubiquitin-protein ligase activity of the BRCA1-BARD1 heterodimer. Component of a complex required to couple deglycosylation and proteasome-mediated degradation of misfolded proteins in the endoplasmic reticulum that are retrotranslocated in the cytosol. The sequence is that of UBX domain-containing protein 1 (Ubxn1) from Rattus norvegicus (Rat).